A 564-amino-acid chain; its full sequence is uncharacterized protein (564 aa).

Polar residues predominate over residues 1 to 17; that stretch reads MRRPSTASLTRTPSRAS. The disordered stretch occupies residues 1-564; sequence MRRPSTASLT…ASTPSSEVIS (564 aa). 2 stretches are compositionally biased toward low complexity: residues 79-97 and 114-134; these read SPRT…RASP and SPTG…ASPT. Residues 153-168 show a composition bias toward polar residues; that stretch reads RSPSTASLTRTPSRAS. Low complexity predominate over residues 170 to 179; it reads TRWPPRASPT. The segment covering 250 to 271 has biased composition (pro residues); sequence GSPPRASPMTPPRASPRTPPRA. Residues 272 to 299 show a composition bias toward low complexity; it reads SPTTTPSRASLTRTPSWASPTTTPSRAS. A compositionally biased stretch (polar residues) spans 318-351; it reads PTGTPSRASPTGTPSRASLTGSPSRASLTGTPSR. Over residues 378-416 the composition is skewed to low complexity; that stretch reads RASLTGTSSTASLTRTPSRASLTRTQSSSSLTRTPSMAS. Polar residues predominate over residues 467-564; that stretch reads SRASLTRTPS…ASTPSSEVIS (98 aa).

This is an uncharacterized protein from Homo sapiens (Human).